Here is a 132-residue protein sequence, read N- to C-terminus: Small ribosomal subunit protein uS8 (132 aa).

Belongs to the universal ribosomal protein uS8 family. In terms of assembly, part of the 30S ribosomal subunit. Contacts proteins S5 and S12.

One of the primary rRNA binding proteins, it binds directly to 16S rRNA central domain where it helps coordinate assembly of the platform of the 30S subunit. This Desulforamulus reducens (strain ATCC BAA-1160 / DSM 100696 / MI-1) (Desulfotomaculum reducens) protein is Small ribosomal subunit protein uS8.